A 94-amino-acid chain; its full sequence is Large ribosomal subunit protein bL25 (94 aa).

It belongs to the bacterial ribosomal protein bL25 family. Part of the 50S ribosomal subunit; part of the 5S rRNA/L5/L18/L25 subcomplex. Contacts the 5S rRNA. Binds to the 5S rRNA independently of L5 and L18.

This is one of the proteins that binds to the 5S RNA in the ribosome where it forms part of the central protuberance. In Salmonella gallinarum (strain 287/91 / NCTC 13346), this protein is Large ribosomal subunit protein bL25.